The sequence spans 97 residues: MLIKQFSRRSKNMKVQILLAFAALFVLAVGSYASESKKLDLRDALFSAMFSADYQLNPQERGCRYFLGECKKTSECCEHLACHDKHKWCAWDWTIGK.

The signal sequence occupies residues 1–33 (MLIKQFSRRSKNMKVQILLAFAALFVLAVGSYA). A propeptide spanning residues 34 to 61 (SESKKLDLRDALFSAMFSADYQLNPQER) is cleaved from the precursor. 3 disulfide bridges follow: Cys63/Cys77, Cys70/Cys82, and Cys76/Cys89.

It belongs to the neurotoxin 10 (Hwtx-1) family. 12 (Hntx-12) subfamily. In terms of tissue distribution, expressed by the venom gland.

The protein localises to the secreted. Ion channel inhibitor. The protein is U6-theraphotoxin-Hhn1a 1 of Cyriopagopus hainanus (Chinese bird spider).